A 299-amino-acid chain; its full sequence is ATP phosphoribosyltransferase (299 aa).

This sequence belongs to the ATP phosphoribosyltransferase family. Long subfamily. It depends on Mg(2+) as a cofactor.

Its subcellular location is the cytoplasm. The enzyme catalyses 1-(5-phospho-beta-D-ribosyl)-ATP + diphosphate = 5-phospho-alpha-D-ribose 1-diphosphate + ATP. It participates in amino-acid biosynthesis; L-histidine biosynthesis; L-histidine from 5-phospho-alpha-D-ribose 1-diphosphate: step 1/9. Its activity is regulated as follows. Feedback inhibited by histidine. Its function is as follows. Catalyzes the condensation of ATP and 5-phosphoribose 1-diphosphate to form N'-(5'-phosphoribosyl)-ATP (PR-ATP). Has a crucial role in the pathway because the rate of histidine biosynthesis seems to be controlled primarily by regulation of HisG enzymatic activity. This chain is ATP phosphoribosyltransferase, found in Mannheimia succiniciproducens (strain KCTC 0769BP / MBEL55E).